A 1489-amino-acid polypeptide reads, in one-letter code: Chromosome partition protein MukB (1489 aa).

34–41 (GGNGAGKS) lines the ATP pocket. 7 coiled-coil regions span residues 326 to 418 (LEAD…QYNQ), 444 to 472 (LETF…QTAH), 509 to 602 (RHLA…QRAP), 780 to 805 (RAAR…ATLS), 835 to 919 (EAEI…GNQL), 977 to 1116 (EMLS…AKAG), and 1209 to 1266 (VEAI…QNVS). The flexible hinge stretch occupies residues 666–783 (PGGSEDSRLN…TVPIFGRAAR (118 aa)).

This sequence belongs to the SMC family. MukB subfamily. As to quaternary structure, homodimerization via its hinge domain. Binds to DNA via its C-terminal region. Interacts, and probably forms a ternary complex, with MukE and MukF via its C-terminal region. The complex formation is stimulated by calcium or magnesium. Interacts with tubulin-related protein FtsZ.

It is found in the cytoplasm. Its subcellular location is the nucleoid. Plays a central role in chromosome condensation, segregation and cell cycle progression. Functions as a homodimer, which is essential for chromosome partition. Involved in negative DNA supercoiling in vivo, and by this means organize and compact chromosomes. May achieve or facilitate chromosome segregation by condensation DNA from both sides of a centrally located replisome during cell division. This is Chromosome partition protein MukB from Citrobacter koseri (strain ATCC BAA-895 / CDC 4225-83 / SGSC4696).